A 358-amino-acid polypeptide reads, in one-letter code: Fructose-bisphosphate aldolase (358 aa).

Ser62 is a D-glyceraldehyde 3-phosphate binding site. Asp109 serves as the catalytic Proton donor. The Zn(2+) site is built by His110, Asp144, Glu174, and His226. Gly227 is a dihydroxyacetone phosphate binding site. Residue His264 coordinates Zn(2+). Dihydroxyacetone phosphate contacts are provided by residues 265-267 and 286-289; these read GGS and NIDT.

Belongs to the class II fructose-bisphosphate aldolase family. It depends on Zn(2+) as a cofactor.

The catalysed reaction is beta-D-fructose 1,6-bisphosphate = D-glyceraldehyde 3-phosphate + dihydroxyacetone phosphate. It participates in carbohydrate degradation; glycolysis; D-glyceraldehyde 3-phosphate and glycerone phosphate from D-glucose: step 4/4. In terms of biological role, catalyzes the aldol condensation of dihydroxyacetone phosphate (DHAP or glycerone-phosphate) with glyceraldehyde 3-phosphate (G3P) to form fructose 1,6-bisphosphate (FBP) in gluconeogenesis and the reverse reaction in glycolysis. This Edwardsiella ictaluri (strain 93-146) protein is Fructose-bisphosphate aldolase (fba).